We begin with the raw amino-acid sequence, 327 residues long: MRVIDSHTAGEPTRLVVEGGPDLGPGSLIEKAACLEAEHMDFCASVVLEPRGHDAIIGALLLPPSQPDCAAAVIYFNNLQNLGMCGHATIGLAVTLAHMGRIDPGRHKFETPVGIVEVDLQDANTVSVVNVESYRLHKDVTVEVPGHGKVTGDVAWGGNWFFLVKESPFDLTLENVPALTAYTKTIRQALENAGVTGTDCAWIDHIELFGPPKDPFAQSRNFVLCPGGAYDRSPCGTGCSAKLACLAEDGVLAPGEDWIQESVIGSTYRISYQPGTTKGVIPTITGQAFVTSDAHLIFNPADPYRFGIRPQNWTTSWITRTLSVEHG.

The active-site Proton acceptor is the Cys85. Residues 86–87 (GH), His205, and Asp231 each bind substrate. Catalysis depends on Cys235, which acts as the Proton donor. 236-237 (GT) lines the substrate pocket.

This sequence belongs to the proline racemase family.

It carries out the reaction trans-4-hydroxy-L-proline = cis-4-hydroxy-D-proline. Catalyzes the epimerization of trans-4-hydroxy-L-proline (t4LHyp) to cis-4-hydroxy-D-proline (c4DHyp). Displays no proline racemase activity. This Roseibium alexandrii (strain DSM 17067 / NCIMB 14079 / DFL-11) (Labrenzia alexandrii) protein is 4-hydroxyproline 2-epimerase.